The following is a 297-amino-acid chain: tRNA dimethylallyltransferase (297 aa).

Residue 15-22 (GPTASGKS) coordinates ATP. 17 to 22 (TASGKS) is a substrate binding site. Interaction with substrate tRNA stretches follow at residues 40–43 (DSMQ) and 164–168 (QRIVR).

It belongs to the IPP transferase family. As to quaternary structure, monomer. Requires Mg(2+) as cofactor.

It catalyses the reaction adenosine(37) in tRNA + dimethylallyl diphosphate = N(6)-dimethylallyladenosine(37) in tRNA + diphosphate. In terms of biological role, catalyzes the transfer of a dimethylallyl group onto the adenine at position 37 in tRNAs that read codons beginning with uridine, leading to the formation of N6-(dimethylallyl)adenosine (i(6)A). The chain is tRNA dimethylallyltransferase from Rhizobium etli (strain ATCC 51251 / DSM 11541 / JCM 21823 / NBRC 15573 / CFN 42).